Here is a 496-residue protein sequence, read N- to C-terminus: Probable zinc metalloprotease SNOG_06590 (496 aa).

The first 20 residues, 1-20 (MRSSMFFAVCAAAALQTALS), serve as a signal peptide directing secretion. A glycan (N-linked (GlcNAc...) asparagine) is linked at N138. 3 residues coordinate Zn(2+): H161, D181, and E226. N241 carries an N-linked (GlcNAc...) asparagine glycan. D253 lines the Zn(2+) pocket. 5 N-linked (GlcNAc...) asparagine glycosylation sites follow: N282, N361, N409, N415, and N457. One can recognise a Fibronectin type-III domain in the interval 402 to 496 (EPMNVGINTT…PFPFGCTRNC (95 aa)).

It belongs to the peptidase M28 family. M28B subfamily. The cofactor is Zn(2+).

It localises to the secreted. The sequence is that of Probable zinc metalloprotease SNOG_06590 from Phaeosphaeria nodorum (strain SN15 / ATCC MYA-4574 / FGSC 10173) (Glume blotch fungus).